A 78-amino-acid chain; its full sequence is Probable [Fe-S]-dependent transcriptional repressor (78 aa).

Iron-sulfur cluster contacts are provided by Cys56, Cys61, Cys64, and Cys70.

The protein belongs to the FeoC family.

Functionally, may function as a transcriptional regulator that controls feoABC expression. The polypeptide is Probable [Fe-S]-dependent transcriptional repressor (Citrobacter koseri (strain ATCC BAA-895 / CDC 4225-83 / SGSC4696)).